A 671-amino-acid chain; its full sequence is Polyadenylate-binding protein 8 (671 aa).

RRM domains follow at residues 45-123 (TSLY…YSVR), 133-210 (GNIF…PFVH), 224-301 (TNVY…KAQK), and 327-404 (SNLY…LAQR). A disordered region spans residues 467-526 (LVPGMRPGGSPMPNFFMPMMQQGQQQQQQQQQQQRPGGGRRGALPQPQQPSPMMQQQMHP). Low complexity-rich tracts occupy residues 483 to 501 (MPMMQQGQQQQQQQQQQQR) and 508 to 525 (GALPQPQQPSPMMQQQMH). The PABC domain maps to 573 to 650 (PIVALATRLA…AMDVLRSVAQ (78 aa)).

It belongs to the polyadenylate-binding protein type-1 family. As to quaternary structure, interacts with ERD15/CID1. Interacts with Turnip mosaic virus (TuMV) VPg-Pro and RNA-dependent RNA polymerase (RdRp). In terms of tissue distribution, expressed predominantly in immature flowers.

The protein resides in the cytoplasm. The protein localises to the nucleus. In terms of biological role, binds the poly(A) tail of mRNA. Appears to be an important mediator of the multiple roles of the poly(A) tail in mRNA biogenesis, stability and translation. During infection with potyvirus TuMV, acts as a potential integral component of the viral replicase complex that could play an important role in the regulation of potyviral RNA-dependent RNA polymerase (RdRp). The polypeptide is Polyadenylate-binding protein 8 (PAB8) (Arabidopsis thaliana (Mouse-ear cress)).